The sequence spans 65 residues: Large ribosomal subunit protein uL30 (65 aa).

This sequence belongs to the universal ribosomal protein uL30 family. Part of the 50S ribosomal subunit.

The chain is Large ribosomal subunit protein uL30 from Mycobacterium bovis (strain ATCC BAA-935 / AF2122/97).